The sequence spans 673 residues: UvrABC system protein B (673 aa).

Positions 26–183 (ANFEAGLAKQ…RHLTDLQYTR (158 aa)) constitute a Helicase ATP-binding domain. 39-46 (GVTGSGKT) provides a ligand contact to ATP. The Beta-hairpin signature appears at 92–115 (YYDYYQPEAYVPSSDTFIEKDSSI). In terms of domain architecture, Helicase C-terminal spans 431 to 597 (QVDDLMSEIH…SVERPISDIM (167 aa)). Positions 601 to 631 (REDAAEKKSGKGRSKSRQVAEETPDYRAMKP) are disordered. A compositionally biased stretch (basic and acidic residues) spans 618–630 (QVAEETPDYRAMK). The UVR domain occupies 635–670 (AGKLKSLEQKMYQHAKDLEFEAAAQIRDQIQKLKTA).

Belongs to the UvrB family. Forms a heterotetramer with UvrA during the search for lesions. Interacts with UvrC in an incision complex.

The protein resides in the cytoplasm. Its function is as follows. The UvrABC repair system catalyzes the recognition and processing of DNA lesions. A damage recognition complex composed of 2 UvrA and 2 UvrB subunits scans DNA for abnormalities. Upon binding of the UvrA(2)B(2) complex to a putative damaged site, the DNA wraps around one UvrB monomer. DNA wrap is dependent on ATP binding by UvrB and probably causes local melting of the DNA helix, facilitating insertion of UvrB beta-hairpin between the DNA strands. Then UvrB probes one DNA strand for the presence of a lesion. If a lesion is found the UvrA subunits dissociate and the UvrB-DNA preincision complex is formed. This complex is subsequently bound by UvrC and the second UvrB is released. If no lesion is found, the DNA wraps around the other UvrB subunit that will check the other stand for damage. The sequence is that of UvrABC system protein B from Xanthomonas oryzae pv. oryzae (strain MAFF 311018).